The chain runs to 238 residues: Carboxymethylenebutenolidase (238 aa).

Residues cysteine 123, aspartate 171, and histidine 201 contribute to the active site.

Belongs to the dienelactone hydrolase family. As to quaternary structure, monomer.

It catalyses the reaction 2-(5-oxo-2,5-dihydrofuran-2-ylidene)acetate + H2O = 4-oxohex-2-enedioate + H(+). It functions in the pathway aromatic compound metabolism; 3-chlorocatechol degradation. Its function is as follows. Ring cleavage of cyclic ester dienelactone to produce maleylacetate. The protein is Carboxymethylenebutenolidase (tcbE) of Pseudomonas sp. (strain P51).